The chain runs to 130 residues: Small ribosomal subunit protein uS9 (130 aa).

The protein belongs to the universal ribosomal protein uS9 family.

In Bacillus anthracis (strain A0248), this protein is Small ribosomal subunit protein uS9.